A 281-amino-acid chain; its full sequence is Tryptophan synthase alpha chain (281 aa).

Residues E49 and D60 each act as proton acceptor in the active site.

It belongs to the TrpA family. In terms of assembly, tetramer of two alpha and two beta chains.

The enzyme catalyses (1S,2R)-1-C-(indol-3-yl)glycerol 3-phosphate + L-serine = D-glyceraldehyde 3-phosphate + L-tryptophan + H2O. The protein operates within amino-acid biosynthesis; L-tryptophan biosynthesis; L-tryptophan from chorismate: step 5/5. The alpha subunit is responsible for the aldol cleavage of indoleglycerol phosphate to indole and glyceraldehyde 3-phosphate. This is Tryptophan synthase alpha chain from Methanocaldococcus jannaschii (strain ATCC 43067 / DSM 2661 / JAL-1 / JCM 10045 / NBRC 100440) (Methanococcus jannaschii).